We begin with the raw amino-acid sequence, 381 residues long: Prostatic acid phosphatase (381 aa).

The first 31 residues, 1 to 31 (MRAVPLPLSRTASLSLGFLLLLSLCLDPGQA), serve as a signal peptide directing secretion. Substrate is bound at residue Arg42. Residue His43 is the Nucleophile of the active site. A substrate-binding site is contributed by Arg46. The N-linked (GlcNAc...) asparagine glycan is linked to Asn93. Residue Arg110 coordinates substrate. 3 disulfide bridges follow: Cys160/Cys371, Cys214/Cys312, and Cys346/Cys350. N-linked (GlcNAc...) asparagine glycosylation is present at Asn219. His288 serves as a coordination point for substrate. Asp289 functions as the Proton donor in the catalytic mechanism. N-linked (GlcNAc...) asparagine glycosylation is present at Asn332.

This sequence belongs to the histidine acid phosphatase family. As to quaternary structure, homodimer; dimer formation is required for phosphatase activity. In terms of tissue distribution, expressed in salivary gland, thymus and thyroid gland. Widely expressed in prostate lobes, brain, kidney, liver, lung, muscle, placenta, salivary gland, spleen, thyroid and thymus. Locates to Schwann cells and fibroblasts. Expressed in peptidergic and non-peptidergic nociceptive (pain-sensing) neurons. Preferentially expressed in non-peptidergic doral root ganglia neurons.

It is found in the secreted. It localises to the cell membrane. Its subcellular location is the lysosome membrane. It catalyses the reaction a phosphate monoester + H2O = an alcohol + phosphate. The enzyme catalyses a ribonucleoside 5'-phosphate + H2O = a ribonucleoside + phosphate. The catalysed reaction is 1-(9Z-octadecenoyl)-sn-glycero-3-phosphate + H2O = 1-(9Z-octadecenoyl)-sn-glycerol + phosphate. It carries out the reaction O-phospho-L-tyrosyl-[protein] + H2O = L-tyrosyl-[protein] + phosphate. A non-specific tyrosine phosphatase that dephosphorylates a diverse number of substrates under acidic conditions (pH 4-6) including alkyl, aryl, and acyl orthophosphate monoesters and phosphorylated proteins. Has lipid phosphatase activity and inactivates lysophosphatidic acid in seminal plasma. Its function is as follows. In addition to its tyrosine phosphatase activity, also has ecto-5'-nucleotidase activity in dorsal root ganglion (DRG) neurons. Generates adenosine from AMP. This extracellular adenosine leads to a decrease in chronic pain by activating A1R in nociceptive neurons. This chain is Prostatic acid phosphatase (Acp3), found in Mus musculus (Mouse).